The chain runs to 870 residues: Ribonucleoside-diphosphate reductase large subunit (870 aa).

Residues 16–110 form the ATP-cone domain; sequence MYVVKRDGTK…VSNLHKQTSK (95 aa). Residues 20–21, 26–32, Thr-71, and Asp-75 each bind ATP; these read KR and ENVSFDK. A GDP-binding site is contributed by Ser-235. Cys-236 and Cys-463 are disulfide-bonded. Residues 244 to 246, Lys-261, Arg-274, and 281 to 282 contribute to the dTTP site; these read DSI and RG. Asn-446 contacts GDP. Asn-446 (proton acceptor) is an active-site residue. Cys-448 acts as the Cysteine radical intermediate in catalysis. GDP-binding positions include Glu-450 and 632–635; that span reads TAST. The active-site Proton acceptor is the Glu-450. The tract at residues 789–854 is disordered; it reads KPVENNINST…NNNEDDLANY (66 aa). The segment covering 796–811 has biased composition (low complexity); sequence NSTTPLKTPTKTPNSS. A compositionally biased stretch (polar residues) spans 812 to 831; the sequence is NRISTSPTNNLTSPIRFNIT. Residues 832 to 844 show a composition bias toward low complexity; that stretch reads QQQQQQQQQQQQQ.

This sequence belongs to the ribonucleoside diphosphate reductase large chain family. Heterodimer of a large and a small subunit.

It localises to the cytoplasm. The catalysed reaction is a 2'-deoxyribonucleoside 5'-diphosphate + [thioredoxin]-disulfide + H2O = a ribonucleoside 5'-diphosphate + [thioredoxin]-dithiol. Under complex allosteric control mediated by deoxynucleoside triphosphates and ATP binding to separate specificity and activation sites on the large subunit. The type of nucleotide bound at the specificity site determines substrate preference. It seems probable that ATP makes the enzyme reduce CDP and UDP, dGTP favors ADP reduction and dTTP favors GDP reduction. Stimulated by ATP and inhibited by dATP binding to the activity site. Functionally, provides the precursors necessary for DNA synthesis. Catalyzes the biosynthesis of deoxyribonucleotides from the corresponding ribonucleotides. The chain is Ribonucleoside-diphosphate reductase large subunit (rnrA) from Dictyostelium discoideum (Social amoeba).